The following is a 447-amino-acid chain: Protein CLT1, chloroplastic (447 aa).

The transit peptide at 1-48 (MATTSSDRLIAGLTASIGSIESRYANPAQSVSLICRNQINGAPPIVLR) directs the protein to the chloroplast. The next 10 helical transmembrane spans lie at 103 to 123 (MEIV…RVLY), 135 to 155 (FFLA…ILYF), 172 to 192 (LPFL…MAAA), 200 to 220 (TTVL…IFLG), 228 to 248 (ILGC…GSGA), 256 to 276 (GILW…DTVM), 304 to 324 (IFQV…WGIP), 351 to 371 (GAPL…ISLL), 387 to 407 (TVSV…LGVA), and 413 to 433 (GFVA…WTPS).

The protein belongs to the CRT-like transporter family.

The protein localises to the plastid. It is found in the chloroplast membrane. Its function is as follows. Involved in thiol transport from the plastid to the cytosol. Transports probably both glutathione (GSH) and its precursor, gamma-glutamylcysteine (gamma-EC). Exhibits some functional redundancy with CLT3 in maintaining the root GSH pool. In Arabidopsis thaliana (Mouse-ear cress), this protein is Protein CLT1, chloroplastic.